A 361-amino-acid chain; its full sequence is Outer mitochondrial transmembrane helix translocase (361 aa).

Residues 1–15 (MVHAEAFSRPLSRNE) lie on the Mitochondrial intermembrane side of the membrane. The helical transmembrane segment at 16–32 (VVGLIFRLTIFGAVTYF) threads the bilayer. Residues 33-361 (TIKWMVDAID…QSVLTHVCLD (329 aa)) are Cytoplasmic-facing. 133–140 (GPPGCGKT) provides a ligand contact to ATP. Residue serine 322 is modified to Phosphoserine.

The protein belongs to the AAA ATPase family. MSP1 subfamily. As to quaternary structure, interacts with GRIA2 and GRIP1 in an ATP-dependent manner. ATAD1-catalyzed ATP hydrolysis disrupts not only its binding to GRIA2 and GRIP1, but also interaction between GRIP1 and GRIA2, leading to AMPAR complex disassembly.

Its subcellular location is the mitochondrion outer membrane. The protein resides in the peroxisome membrane. The protein localises to the postsynaptic cell membrane. It carries out the reaction [protein]-with a C-terminal TM segment(out) + ATP + H2O = [protein]-with a C-terminal TM segment(in) + ADP + phosphate + H(+). In terms of biological role, outer mitochondrial translocase required to remove mislocalized tail-anchored transmembrane proteins on mitochondria. Specifically recognizes and binds tail-anchored transmembrane proteins: acts as a dislocase that mediates the ATP-dependent extraction of mistargeted tail-anchored transmembrane proteins from the mitochondrion outer membrane. Also plays a critical role in regulating the surface expression of AMPA receptors (AMPAR), thereby regulating synaptic plasticity and learning and memory. Required for NMDA-stimulated AMPAR internalization and inhibition of GRIA1 and GRIA2 recycling back to the plasma membrane; these activities are ATPase-dependent. This is Outer mitochondrial transmembrane helix translocase from Rattus norvegicus (Rat).